Reading from the N-terminus, the 312-residue chain is Ribosomal RNA small subunit methyltransferase H (312 aa).

S-adenosyl-L-methionine-binding positions include 38-40 (GGH), Asp-58, Phe-84, Asp-104, and Gln-111.

The protein belongs to the methyltransferase superfamily. RsmH family.

The protein localises to the cytoplasm. The catalysed reaction is cytidine(1402) in 16S rRNA + S-adenosyl-L-methionine = N(4)-methylcytidine(1402) in 16S rRNA + S-adenosyl-L-homocysteine + H(+). Specifically methylates the N4 position of cytidine in position 1402 (C1402) of 16S rRNA. In Alcanivorax borkumensis (strain ATCC 700651 / DSM 11573 / NCIMB 13689 / SK2), this protein is Ribosomal RNA small subunit methyltransferase H.